Consider the following 280-residue polypeptide: uncharacterized protein (280 aa).

Basic and acidic residues-rich tracts occupy residues Glu-110 to Gln-122, Ala-167 to Arg-177, Ala-223 to Gln-261, and Asp-269 to Glu-280. Disordered regions lie at residues Glu-110–His-137, His-151–Arg-177, and Thr-219–Glu-280.

This is an uncharacterized protein from Agrobacterium vitis (Rhizobium vitis).